The following is a 239-amino-acid chain: Small ribosomal subunit protein uS3 (239 aa).

The 69-residue stretch at 39 to 107 (IRAALMKTLK…EVLINIVEVR (69 aa)) folds into the KH type-2 domain. The tract at residues 214 to 239 (AQDKKMAEQDHGGGGGDRRRRDRDAA) is disordered.

The protein belongs to the universal ribosomal protein uS3 family. Part of the 30S ribosomal subunit. Forms a tight complex with proteins S10 and S14.

Functionally, binds the lower part of the 30S subunit head. Binds mRNA in the 70S ribosome, positioning it for translation. In Methylocella silvestris (strain DSM 15510 / CIP 108128 / LMG 27833 / NCIMB 13906 / BL2), this protein is Small ribosomal subunit protein uS3.